We begin with the raw amino-acid sequence, 84 residues long: Cell division topological specificity factor (84 aa).

It belongs to the MinE family.

Its function is as follows. Prevents the cell division inhibition by proteins MinC and MinD at internal division sites while permitting inhibition at polar sites. This ensures cell division at the proper site by restricting the formation of a division septum at the midpoint of the long axis of the cell. This Chromohalobacter salexigens (strain ATCC BAA-138 / DSM 3043 / CIP 106854 / NCIMB 13768 / 1H11) protein is Cell division topological specificity factor.